The primary structure comprises 155 residues: Ribosomal RNA large subunit methyltransferase H (155 aa).

Residues L72, G103, and 122–127 (LSDLTL) contribute to the S-adenosyl-L-methionine site.

This sequence belongs to the RNA methyltransferase RlmH family. Homodimer.

It localises to the cytoplasm. It carries out the reaction pseudouridine(1915) in 23S rRNA + S-adenosyl-L-methionine = N(3)-methylpseudouridine(1915) in 23S rRNA + S-adenosyl-L-homocysteine + H(+). In terms of biological role, specifically methylates the pseudouridine at position 1915 (m3Psi1915) in 23S rRNA. The chain is Ribosomal RNA large subunit methyltransferase H from Verminephrobacter eiseniae (strain EF01-2).